Here is a 652-residue protein sequence, read N- to C-terminus: DNA ligase (652 aa).

NAD(+) is bound by residues 29–33, 78–79, and E107; these read DQEYD and SL. Residue K109 is the N6-AMP-lysine intermediate of the active site. NAD(+) is bound by residues R130, E164, K278, and K302. Zn(2+) is bound by residues C395, C398, C413, and C418. A BRCT domain is found at 577 to 652; the sequence is DTSAQLFGLT…VKDENWLLQL (76 aa).

It belongs to the NAD-dependent DNA ligase family. LigA subfamily. Requires Mg(2+) as cofactor. It depends on Mn(2+) as a cofactor.

It carries out the reaction NAD(+) + (deoxyribonucleotide)n-3'-hydroxyl + 5'-phospho-(deoxyribonucleotide)m = (deoxyribonucleotide)n+m + AMP + beta-nicotinamide D-nucleotide.. In terms of biological role, DNA ligase that catalyzes the formation of phosphodiester linkages between 5'-phosphoryl and 3'-hydroxyl groups in double-stranded DNA using NAD as a coenzyme and as the energy source for the reaction. It is essential for DNA replication and repair of damaged DNA. The sequence is that of DNA ligase from Streptococcus uberis (strain ATCC BAA-854 / 0140J).